Reading from the N-terminus, the 421-residue chain is Serine--tRNA ligase (421 aa).

L-serine is bound at residue 231 to 233; that stretch reads TGE. An ATP-binding site is contributed by 262–264; sequence RRE. Glu-285 contacts L-serine. An ATP-binding site is contributed by 349 to 352; that stretch reads EVSS. Residue Ser-384 coordinates L-serine.

Belongs to the class-II aminoacyl-tRNA synthetase family. Type-1 seryl-tRNA synthetase subfamily. Homodimer. The tRNA molecule binds across the dimer.

It is found in the cytoplasm. It catalyses the reaction tRNA(Ser) + L-serine + ATP = L-seryl-tRNA(Ser) + AMP + diphosphate + H(+). The enzyme catalyses tRNA(Sec) + L-serine + ATP = L-seryl-tRNA(Sec) + AMP + diphosphate + H(+). It functions in the pathway aminoacyl-tRNA biosynthesis; selenocysteinyl-tRNA(Sec) biosynthesis; L-seryl-tRNA(Sec) from L-serine and tRNA(Sec): step 1/1. In terms of biological role, catalyzes the attachment of serine to tRNA(Ser). Is also able to aminoacylate tRNA(Sec) with serine, to form the misacylated tRNA L-seryl-tRNA(Sec), which will be further converted into selenocysteinyl-tRNA(Sec). In Methylacidiphilum infernorum (isolate V4) (Methylokorus infernorum (strain V4)), this protein is Serine--tRNA ligase.